Reading from the N-terminus, the 309-residue chain is Protein phosphatase 1 regulatory subunit 42 (309 aa).

LRR repeat units follow at residues 29–50 (KITHINFSDKNIDAIEDLSLCK), 51–72 (NLSVLYLYDNCISQITNLNYAT), 73–94 (NLTHLYLQNNCISCIENLRSLK), 95–116 (KLEKLYLGGNYIAVIEGLEGLG), 117–138 (ELRELHVENQRLPLGEKLLFDP), 147–168 (SLCILNISNNNIDDITDLELLE), and 169–190 (NLNQLIAVDNQLLHVKDLEFLL). The LRRCT domain maps to 204-242 (NPVCLKPKYRDRLILVSKSLEFLDGKEIKNIERQFLMNW).

In terms of assembly, interacts with PPP1CC isoform gamma-2; the interaction is direct. Interacts with actin, dynein, KIF5B, KIFC1 and tubulin. Associates with microtubules. Post-translationally, phosphorylated; in the testis.

The protein localises to the cytoplasm. It is found in the cytoskeleton. It localises to the microtubule organizing center. The protein resides in the centrosome. Functionally, regulates phosphatase activity of protein phosphatase 1 (PP1) complexes in the testis. In Homo sapiens (Human), this protein is Protein phosphatase 1 regulatory subunit 42.